We begin with the raw amino-acid sequence, 628 residues long: Rac GTPase-activating protein 1 (628 aa).

An N-acetylmethionine modification is found at M1. Positions 33-110 (QVVKDFEDFR…IQLIRDILMC (78 aa)) form a coiled coil. The interval 107–286 (ILMCDTSGSI…GTPQNTGGMR (180 aa)) is interaction with SLC26A8. S150 bears the Phosphoserine; by PLK1 mark. S155 is modified (phosphoserine). S158 carries the post-translational modification Phosphoserine; by PLK1. T162 carries the phosphothreonine modification. Phosphoserine; by PLK1 is present on residues S165 and S171. A disordered region spans residues 179–201 (KKREKRRSNSRQFIDGPPGPVKK). Phosphoserine is present on residues S204, S207, and S215. Residues 242 to 284 (SWTRSRGKSGPLQPVNSDSALNSRPLEPRTDTDNLGTPQNTGG) are disordered. A Glycyl lysine isopeptide (Lys-Gly) (interchain with G-Cter in SUMO2) cross-link involves residue K249. The residue at position 258 (S258) is a Phosphoserine. Positions 274–283 (DNLGTPQNTG) are enriched in polar residues. The Phorbol-ester/DAG-type zinc-finger motif lies at 287–336 (LHDFVSKTVIKPESCVPCGKRIKFGKLSLKCRDCRLVSHPECRDRCPLPC). Position 343 is a phosphothreonine (T343). Residues 350 to 540 (GMLADFVSQA…RLLSLPLEYW (191 aa)) enclose the Rho-GAP domain. S388 bears the Phosphoserine; by AURKB mark. K405 is covalently cross-linked (Glycyl lysine isopeptide (Lys-Gly) (interchain with G-Cter in SUMO2)). Position 411 is a phosphoserine; by AURKB (S411). Phosphothreonine is present on residues T564, T577, T585, and T602.

As to quaternary structure, heterotetramer of two molecules each of RACGAP1 and KIF23. Found in the centralspindlin complex. Associates with alpha-, beta- and gamma-tubulin and microtubules. Interacts via its Rho-GAP domain with RND2. Associates with AURKB during M phase. Interacts via its Rho-GAP domain and basic region with PRC1. The interaction with PRC1 inhibits its GAP activity towards CDC42 in vitro, which may be required for maintaining normal spindle morphology. Interacts with SLC26A8 via its N-terminus. Interacts with ECT2; the interaction is direct, occurs at anaphase and during cytokinesis in a microtubule-dependent manner, is enhanced by phosphorylation by PLK1 and phosphorylation at Ser-165 plays a major role in mediating binding. Interacts with RAB11FIP3; the interaction occurs at late telophase. Interacts with KIF23; the interaction is direct. In terms of processing, phosphorylated at multiple sites in the midbody during cytokinesis. Phosphorylation by AURKB on Ser-388 at the midbody is, at least in part, responsible for exerting its latent GAP activity towards RhoA. Phosphorylation on multiple serine residues by PLK1 enhances its association with ECT2 and is critical for cleavage furrow formation. Phosphorylation on Ser-165 plays a major role in mediating interaction with ECT2. Phosphorylation on Ser-158 does not appear to contribute to binding to ECT2. As to expression, highly expressed in testis, thymus and spleen and weakly expressed in brain, heart, skeletal muscle and kidney. In testis, expression is restricted to germ cells with the highest levels of expression found in spermatocytes. Not detected in adult liver. Also expressed in fetal liver and in several hematopoietic cell lines.

It localises to the nucleus. The protein resides in the cytoplasm. Its subcellular location is the cytoskeleton. It is found in the spindle. The protein localises to the cytoplasmic vesicle. It localises to the secretory vesicle. The protein resides in the acrosome. Its subcellular location is the cleavage furrow. It is found in the midbody. The protein localises to the midbody ring. It localises to the cell membrane. Component of the centralspindlin complex that serves as a microtubule-dependent and Rho-mediated signaling required for the myosin contractile ring formation during the cell cycle cytokinesis. Required for proper attachment of the midbody to the cell membrane during cytokinesis. Sequentially binds to ECT2 and RAB11FIP3 which regulates cleavage furrow ingression and abscission during cytokinesis. Plays key roles in controlling cell growth and differentiation of hematopoietic cells through mechanisms other than regulating Rac GTPase activity. Has a critical role in erythropoiesis. Also involved in the regulation of growth-related processes in adipocytes and myoblasts. May be involved in regulating spermatogenesis and in the RACGAP1 pathway in neuronal proliferation. Shows strong GAP (GTPase activation) activity towards CDC42 and RAC1 and less towards RHOA. Essential for the early stages of embryogenesis. May play a role in regulating cortical activity through RHOA during cytokinesis. May participate in the regulation of sulfate transport in male germ cells. This Mus musculus (Mouse) protein is Rac GTPase-activating protein 1.